Consider the following 255-residue polypeptide: Phosphoribosyl isomerase A (255 aa).

Aspartate 21 functions as the Proton acceptor in the catalytic mechanism. Residue aspartate 140 is the Proton donor of the active site.

It belongs to the HisA/HisF family.

The protein resides in the cytoplasm. The enzyme catalyses 1-(5-phospho-beta-D-ribosyl)-5-[(5-phospho-beta-D-ribosylamino)methylideneamino]imidazole-4-carboxamide = 5-[(5-phospho-1-deoxy-D-ribulos-1-ylimino)methylamino]-1-(5-phospho-beta-D-ribosyl)imidazole-4-carboxamide. It carries out the reaction N-(5-phospho-beta-D-ribosyl)anthranilate = 1-(2-carboxyphenylamino)-1-deoxy-D-ribulose 5-phosphate. Its pathway is amino-acid biosynthesis; L-histidine biosynthesis; L-histidine from 5-phospho-alpha-D-ribose 1-diphosphate: step 4/9. It functions in the pathway amino-acid biosynthesis; L-tryptophan biosynthesis; L-tryptophan from chorismate: step 3/5. Its function is as follows. Involved in both the histidine and tryptophan biosynthetic pathways. The polypeptide is Phosphoribosyl isomerase A (Mycolicibacterium vanbaalenii (strain DSM 7251 / JCM 13017 / BCRC 16820 / KCTC 9966 / NRRL B-24157 / PYR-1) (Mycobacterium vanbaalenii)).